A 380-amino-acid chain; its full sequence is 3-dehydroquinate synthase (380 aa).

NAD(+)-binding positions include 100 to 104 (GAASD), 124 to 125 (TT), lysine 137, and lysine 146. 3 residues coordinate Zn(2+): glutamate 179, histidine 251, and histidine 267.

The protein belongs to the sugar phosphate cyclases superfamily. Dehydroquinate synthase family. It depends on NAD(+) as a cofactor. Co(2+) serves as cofactor. The cofactor is Zn(2+).

It localises to the cytoplasm. It carries out the reaction 7-phospho-2-dehydro-3-deoxy-D-arabino-heptonate = 3-dehydroquinate + phosphate. It functions in the pathway metabolic intermediate biosynthesis; chorismate biosynthesis; chorismate from D-erythrose 4-phosphate and phosphoenolpyruvate: step 2/7. Catalyzes the conversion of 3-deoxy-D-arabino-heptulosonate 7-phosphate (DAHP) to dehydroquinate (DHQ). The chain is 3-dehydroquinate synthase from Tropheryma whipplei (strain TW08/27) (Whipple's bacillus).